Reading from the N-terminus, the 633-residue chain is MELRTKTLNIQPPKKPFSNTYQAFVLEKKNALGKNFDNKKVQADYNKLSNNEKERLQKLVDNAEEKYKEELFHYNNHIQGKGKQKYVPQVKVPEKPKKPIGSFFRFLEENRQKYAAKHKDLTNAKILKIMSEDFNNLPQKEVKVYEDAYQKEYAQYLVEFKKWNEKYGQAAQKKQTKRKNSTSKSRRSSSKGKSSVSKGRTKSTSSKRRADSSASQGRSQSSSSNRRKASSSKDQKGTRSSSRKASNSKGRKNSTSNKRNSSSSSKRSSSSKNKKSSSSKNKKSSSSKGRKSSSSRGRKASSSKNRKSSKSKDRKSSSSKGRKSSSSSKSNKRKASSSRGRKSSSSKGRKSSKSQERKNSHADTSKQMEDEGQKRRQSSSSAKRDESSKKSRRNSMKEARTKKANNKSASKASKSGSKSKGKSASKSKGKSSSKGKNSKSRSASKPKSNAAQNSNNTHQTADSSENASSTTQTRTRGRQREQKDMVNEKSNSKSSSKGKKNSKSNTRSKSKSKSASKSRKNASKSKKDTTNHGRQTRSKSRSESKSKSEAPNKNSNKMEVIEQPKEESSDRKRRESRSQSAKKTSDKKSKNRSDSKKMTAEDPKKNNAEDSKGKKKSKEGKTGAYGKKANKKQ.

2 DNA-binding regions (HMG box) span residues 12–74 (PPKK…LFHY) and 96–164 (PKKP…KKWN). The segment at 170–633 (AAQKKQTKRK…AYGKKANKKQ (464 aa)) is disordered. Basic residues predominate over residues 174–190 (KQTKRKNSTSKSRRSSS). Low complexity-rich tracts occupy residues 212-224 (SSASQGRSQSSSS) and 253-271 (NSTSNKRNSSSSSKRSSSS). Basic residues-rich tracts occupy residues 272-309 (KNKKSSSSKNKKSSSSKGRKSSSSRGRKASSSKNRKSS) and 330-352 (SNKRKASSSRGRKSSSSKGRKSS). 2 stretches are compositionally biased toward basic and acidic residues: residues 353-374 (KSQERKNSHADTSKQMEDEGQK) and 382-401 (AKRDESSKKSRRNSMKEART). Over residues 406–416 (NKSASKASKSG) the composition is skewed to low complexity. Positions 417 to 444 (SKSKGKSASKSKGKSSSKGKNSKSRSAS) are enriched in basic residues. Polar residues predominate over residues 446–469 (PKSNAAQNSNNTHQTADSSENASS). Over residues 478 to 491 (RQREQKDMVNEKSN) the composition is skewed to basic and acidic residues. Basic residues predominate over residues 496–524 (SKGKKNSKSNTRSKSKSKSASKSRKNASK). 2 stretches are compositionally biased toward basic and acidic residues: residues 540-550 (SRSESKSKSEA) and 559-612 (EVIE…EDSK).

Post-translationally, all four histones are processed from the precursor molecule. In terms of processing, phosphorylated in growing and dividing cells but not in nongrowing (starved) cells. The N-terminus of MIC LH-alpha and MIC LH-delta is blocked.

It localises to the nucleus. The protein localises to the chromosome. The protein is Micronuclear linker histone polyprotein (MLH) of Tetrahymena thermophila (strain SB210).